Consider the following 347-residue polypeptide: NHL repeat-containing protein 3 (347 aa).

The first 25 residues, 1 to 25 (MARFWVCVAGAGFFLAFLVLHSRFC), serve as a signal peptide directing secretion. Residue N32 is glycosylated (N-linked (GlcNAc...) asparagine). Residues 47-93 (RLDVGWPKHPEYFTGTTFCVAVDSLNGLVYIGQRGDNIPKILVFTED) form an NHL 1 repeat. N101 carries an N-linked (GlcNAc...) asparagine glycan. 2 NHL repeats span residues 150-196 (TPGK…LSQD) and 200-243 (LWLH…FDKD). 2 N-linked (GlcNAc...) asparagine glycosylation sites follow: N206 and N278. One copy of the NHL 4 repeat lies at 294-338 (GECSVISTIQLADQVLPHLLEVDRKTGAVYVAEIGAKQVQKYVPL).

Its subcellular location is the secreted. The protein is NHL repeat-containing protein 3 (NHLRC3) of Homo sapiens (Human).